Consider the following 373-residue polypeptide: Dynein regulatory complex protein 9 (373 aa).

Residues 145–200 (EQAMKETIEREKNTTAAVRQLRNDLREEKLDHEEKMKEKKKGLSTLKEQLKALKMD) are a coiled coil. Residues 336 to 365 (RAQAAVIIQAWWRGHKVRMVMSGGGKKGAK) enclose the IQ domain.

Belongs to the DRC9 family. As to quaternary structure, component of the nexin-dynein regulatory complex (N-DRC).

Its subcellular location is the cytoplasm. The protein localises to the cytoskeleton. It is found in the flagellum axoneme. In terms of biological role, component of the nexin-dynein regulatory complex (N-DRC), a key regulator of ciliary/flagellar motility which maintains the alignment and integrity of the distal axoneme and regulates microtubule sliding in motile axonemes. This chain is Dynein regulatory complex protein 9, found in Chlamydomonas reinhardtii (Chlamydomonas smithii).